A 213-amino-acid chain; its full sequence is Redox-sensing transcriptional repressor Rex (213 aa).

The H-T-H motif DNA-binding region spans 16–55 (IYYRYLRLLSNSGKNRVSSTELAEAVKVDSATIRRDFSYF). 90 to 95 (GVGNLG) serves as a coordination point for NAD(+).

This sequence belongs to the transcriptional regulatory Rex family. Homodimer.

The protein localises to the cytoplasm. Functionally, modulates transcription in response to changes in cellular NADH/NAD(+) redox state. This Ligilactobacillus salivarius (strain UCC118) (Lactobacillus salivarius) protein is Redox-sensing transcriptional repressor Rex.